A 321-amino-acid chain; its full sequence is Lipoyl synthase (321 aa).

The [4Fe-4S] cluster site is built by Cys-68, Cys-73, Cys-79, Cys-94, Cys-98, Cys-101, and Ser-308. In terms of domain architecture, Radical SAM core spans 80 to 297 (FNHGTATFMI…KAAAMDMGFT (218 aa)).

The protein belongs to the radical SAM superfamily. Lipoyl synthase family. [4Fe-4S] cluster is required as a cofactor.

It localises to the cytoplasm. It catalyses the reaction [[Fe-S] cluster scaffold protein carrying a second [4Fe-4S](2+) cluster] + N(6)-octanoyl-L-lysyl-[protein] + 2 oxidized [2Fe-2S]-[ferredoxin] + 2 S-adenosyl-L-methionine + 4 H(+) = [[Fe-S] cluster scaffold protein] + N(6)-[(R)-dihydrolipoyl]-L-lysyl-[protein] + 4 Fe(3+) + 2 hydrogen sulfide + 2 5'-deoxyadenosine + 2 L-methionine + 2 reduced [2Fe-2S]-[ferredoxin]. It functions in the pathway protein modification; protein lipoylation via endogenous pathway; protein N(6)-(lipoyl)lysine from octanoyl-[acyl-carrier-protein]: step 2/2. In terms of biological role, catalyzes the radical-mediated insertion of two sulfur atoms into the C-6 and C-8 positions of the octanoyl moiety bound to the lipoyl domains of lipoate-dependent enzymes, thereby converting the octanoylated domains into lipoylated derivatives. The chain is Lipoyl synthase from Erwinia tasmaniensis (strain DSM 17950 / CFBP 7177 / CIP 109463 / NCPPB 4357 / Et1/99).